The chain runs to 805 residues: Phenylalanine--tRNA ligase beta subunit (805 aa).

The region spanning 39–154 is the tRNA-binding domain; it reads SEGLKKVVVG…DDATPGDPVF (116 aa). The 76-residue stretch at 410–485 folds into the B5 domain; sequence VQPTTVTIDL…RLYGYDNLPA (76 aa). Mg(2+) contacts are provided by D463, D469, E472, and E473. The FDX-ACB domain maps to 712 to 805; sequence SKFPSITRDV…LTDELGAEIR (94 aa).

This sequence belongs to the phenylalanyl-tRNA synthetase beta subunit family. Type 1 subfamily. Tetramer of two alpha and two beta subunits. Requires Mg(2+) as cofactor.

The protein resides in the cytoplasm. The catalysed reaction is tRNA(Phe) + L-phenylalanine + ATP = L-phenylalanyl-tRNA(Phe) + AMP + diphosphate + H(+). The protein is Phenylalanine--tRNA ligase beta subunit of Lactiplantibacillus plantarum (strain ATCC BAA-793 / NCIMB 8826 / WCFS1) (Lactobacillus plantarum).